Reading from the N-terminus, the 597-residue chain is uncharacterized protein (597 aa).

Transmembrane regions (helical) follow at residues 4–23 (LLLALLLCLAVGTAGGFKIV) and 209–231 (FVSVSAPGFVGVTAAMSSAGIAI).

Its subcellular location is the cell membrane. This is an uncharacterized protein from Archaeoglobus fulgidus (strain ATCC 49558 / DSM 4304 / JCM 9628 / NBRC 100126 / VC-16).